The following is a 265-amino-acid chain: Signal peptidase I (265 aa).

Residues 1-19 (MQIDTKTNTNKTTAQEWKS) lie on the Cytoplasmic side of the membrane. A helical membrane pass occupies residues 20-40 (FAFVVCIALLIRILIMEPFTV). At 41–265 (PTGSMKATIL…IFRNLYNTDE (225 aa)) the chain is on the periplasmic side. Residues Ser-44 and Lys-107 contribute to the active site.

The protein belongs to the peptidase S26 family.

It is found in the cell inner membrane. The enzyme catalyses Cleavage of hydrophobic, N-terminal signal or leader sequences from secreted and periplasmic proteins.. This Rickettsia canadensis (strain McKiel) protein is Signal peptidase I (lepB).